Consider the following 330-residue polypeptide: Aspartate--ammonia ligase (330 aa).

It belongs to the class-II aminoacyl-tRNA synthetase family. AsnA subfamily.

The protein resides in the cytoplasm. The catalysed reaction is L-aspartate + NH4(+) + ATP = L-asparagine + AMP + diphosphate + H(+). Its pathway is amino-acid biosynthesis; L-asparagine biosynthesis; L-asparagine from L-aspartate (ammonia route): step 1/1. This Streptococcus thermophilus (strain ATCC BAA-250 / LMG 18311) protein is Aspartate--ammonia ligase.